Here is a 344-residue protein sequence, read N- to C-terminus: Phosphoribosylformylglycinamidine cyclo-ligase (344 aa).

This sequence belongs to the AIR synthase family.

Its subcellular location is the cytoplasm. It catalyses the reaction 2-formamido-N(1)-(5-O-phospho-beta-D-ribosyl)acetamidine + ATP = 5-amino-1-(5-phospho-beta-D-ribosyl)imidazole + ADP + phosphate + H(+). It functions in the pathway purine metabolism; IMP biosynthesis via de novo pathway; 5-amino-1-(5-phospho-D-ribosyl)imidazole from N(2)-formyl-N(1)-(5-phospho-D-ribosyl)glycinamide: step 2/2. The sequence is that of Phosphoribosylformylglycinamidine cyclo-ligase from Neisseria meningitidis serogroup C (strain 053442).